Consider the following 341-residue polypeptide: Ferrochelatase (341 aa).

Residues His-210 and Glu-291 each coordinate Fe cation.

It belongs to the ferrochelatase family.

Its subcellular location is the cytoplasm. The enzyme catalyses heme b + 2 H(+) = protoporphyrin IX + Fe(2+). Its pathway is porphyrin-containing compound metabolism; protoheme biosynthesis; protoheme from protoporphyrin-IX: step 1/1. Functionally, catalyzes the ferrous insertion into protoporphyrin IX. This is Ferrochelatase from Alcanivorax borkumensis (strain ATCC 700651 / DSM 11573 / NCIMB 13689 / SK2).